The sequence spans 268 residues: Ribosomal RNA large subunit methyltransferase E (268 aa).

Positions 1 to 60 are disordered; that stretch reads MKPPRSRSGSSKDTGPKRIPGKALKSASNPGENDATLDSATARTARNKTVSLRTARGRTT. A compositionally biased stretch (polar residues) spans 26–52; it reads SASNPGENDATLDSATARTARNKTVSL. S-adenosyl-L-methionine is bound by residues Gly-115, Trp-117, Asp-133, Asp-149, and Asp-173. The Proton acceptor role is filled by Lys-213.

It belongs to the class I-like SAM-binding methyltransferase superfamily. RNA methyltransferase RlmE family.

It is found in the cytoplasm. It catalyses the reaction uridine(2552) in 23S rRNA + S-adenosyl-L-methionine = 2'-O-methyluridine(2552) in 23S rRNA + S-adenosyl-L-homocysteine + H(+). Specifically methylates the uridine in position 2552 of 23S rRNA at the 2'-O position of the ribose in the fully assembled 50S ribosomal subunit. The protein is Ribosomal RNA large subunit methyltransferase E of Gluconobacter oxydans (strain 621H) (Gluconobacter suboxydans).